The sequence spans 124 residues: Small ribosomal subunit protein bS6 (124 aa).

Residues 96 to 124 form a disordered region; sequence ETGPSPMMKEVQREEAKKAAAAQPTEAQA. Residues 114 to 124 are compositionally biased toward low complexity; the sequence is AAAAQPTEAQA.

This sequence belongs to the bacterial ribosomal protein bS6 family.

Functionally, binds together with bS18 to 16S ribosomal RNA. The sequence is that of Small ribosomal subunit protein bS6 from Burkholderia mallei (strain ATCC 23344).